A 168-amino-acid polypeptide reads, in one-letter code: ATP synthase F(1) complex subunit delta, mitochondrial (168 aa).

The transit peptide at 1–22 directs the protein to the mitochondrion; that stretch reads MLPAALLRRPGLGRLVRHARAY. 2 positions are modified to N6-acetyllysine; alternate: Lys136 and Lys165. 2 positions are modified to N6-succinyllysine; alternate: Lys136 and Lys165.

Belongs to the ATPase epsilon chain family. Component of the ATP synthase complex composed at least of ATP5F1A/subunit alpha, ATP5F1B/subunit beta, ATP5MC1/subunit c (homooctomer), MT-ATP6/subunit a, MT-ATP8/subunit 8, ATP5ME/subunit e, ATP5MF/subunit f, ATP5MG/subunit g, ATP5MK/subunit k, ATP5MJ/subunit j, ATP5F1C/subunit gamma, ATP5F1D/subunit delta, ATP5F1E/subunit epsilon, ATP5PF/subunit F6, ATP5PB/subunit b, ATP5PD/subunit d, ATP5PO/subunit OSCP. ATP synthase complex consists of a soluble F(1) head domain (subunits alpha(3) and beta(3)) - the catalytic core - and a membrane F(0) domain - the membrane proton channel (subunits c, a, 8, e, f, g, k and j). These two domains are linked by a central stalk (subunits gamma, delta, and epsilon) rotating inside the F1 region and a stationary peripheral stalk (subunits F6, b, d, and OSCP). Component of a complex composed at least by ATPIF1, ATP5F1A, ATP5F1B, ATP5F1C AND ATP5F1E.

Its subcellular location is the mitochondrion. The protein localises to the mitochondrion inner membrane. In terms of biological role, subunit delta, of the mitochondrial membrane ATP synthase complex (F(1)F(0) ATP synthase or Complex V) that produces ATP from ADP in the presence of a proton gradient across the membrane which is generated by electron transport complexes of the respiratory chain. ATP synthase complex consist of a soluble F(1) head domain - the catalytic core - and a membrane F(1) domain - the membrane proton channel. These two domains are linked by a central stalk rotating inside the F(1) region and a stationary peripheral stalk. During catalysis, ATP synthesis in the catalytic domain of F(1) is coupled via a rotary mechanism of the central stalk subunits to proton translocation. In vivo, can only synthesize ATP although its ATP hydrolase activity can be activated artificially in vitro. With the central stalk subunit gamma, is essential for the biogenesis of F(1) catalytic part of the ATP synthase complex namely in the formation of F1 assembly intermediate. The sequence is that of ATP synthase F(1) complex subunit delta, mitochondrial from Homo sapiens (Human).